Reading from the N-terminus, the 493-residue chain is MTTVRTRIAPSPTGDPHVGTAYIALFNYCFAKQHGGEFILRIEDTDQLRSTRESEQQIFDALRWLGIDWSEGPDVGGPHGPYRQSERGDIYQKYCQQLVDMGHAFPCFCTAEELDQMRAEQMARGETPRYDGRALLLSKEEVARRLAAGEPHVIRMKVPSEGVCVVPDMLRGDVEIPWDRMDMQVLMKTDGLPTYFLANVVDDHLMGITHVLRGEEWLPSAPKLILLYEYFGWEQPELCYMPLLRNPDKSKLSKRKNPTSVTFYERMGFMPEAMLNYLGRMGWSMPDEREKFSLQEMVDNFDLKRVSLGGPIFDIEKLSWLNGQWLRDLPVEEFAARVQKWAFNSEYMMKIAPHVQGRVETFSQVAPLAGFFFAGGVNPDAKLFESKKLSGDQVRQLMQLILWKLESLRQWEKDSITATIQAVVESLELKLRDAMPLMFAAITGQASSVSVLDAMEILGPDLTRFRLRQAIDLLGGVSKKENKEWEKLLGAIA.

The 'HIGH' region motif lies at 10–20 (PSPTGDPHVGT). A 'KMSKS' region motif is present at residues 251 to 255 (KLSKR). Lys254 contacts ATP.

The protein belongs to the class-I aminoacyl-tRNA synthetase family. Glutamate--tRNA ligase type 1 subfamily. As to quaternary structure, monomer.

It is found in the cytoplasm. The catalysed reaction is tRNA(Glu) + L-glutamate + ATP = L-glutamyl-tRNA(Glu) + AMP + diphosphate. Catalyzes the attachment of glutamate to tRNA(Glu) in a two-step reaction: glutamate is first activated by ATP to form Glu-AMP and then transferred to the acceptor end of tRNA(Glu). The chain is Glutamate--tRNA ligase from Pseudomonas fluorescens (strain Pf0-1).